Here is a 58-residue protein sequence, read N- to C-terminus: Large ribosomal subunit protein bL32 (58 aa).

Basic residues predominate over residues 1–15 (MAVPKKKTSKAKRNQ). Positions 1–23 (MAVPKKKTSKAKRNQRSATWKGK) are disordered.

It belongs to the bacterial ribosomal protein bL32 family.

This Parasynechococcus marenigrum (strain WH8102) protein is Large ribosomal subunit protein bL32.